Consider the following 185-residue polypeptide: MRHPLVKNAEDRMNKAVEKISEELRKMRTGRPSPAILEEIKVDYYGAQTPISQLATVNITEDRALIIKPWDRSVLSSIEKAIFASDLGLTPQNDGNVIRLTFPTPTTEQRQKWAKKAKEIAEQGKIAIRNIRRDILKELKGDTKDGKISEDDEKRIEKEIQDLTDKKILEIDKLLEKKEKEIMEV.

The protein belongs to the RRF family.

It is found in the cytoplasm. In terms of biological role, responsible for the release of ribosomes from messenger RNA at the termination of protein biosynthesis. May increase the efficiency of translation by recycling ribosomes from one round of translation to another. The chain is Ribosome-recycling factor from Pseudothermotoga lettingae (strain ATCC BAA-301 / DSM 14385 / NBRC 107922 / TMO) (Thermotoga lettingae).